The chain runs to 523 residues: MALMSQAGSSHCIYSEKVRCISGHRSIINNMDMFRMREICFGVDISSRNASRRVQGNYLNHIGVGSRRGDLTIVAASPPTEDAVVAAEPLTKEDLVGYLASGCKSKEKWRIGTEHEKFGFEFGTLRPMKYDQIADLLNGIAERFDWEKVMEGDKIIGLKQGKQSISLEPGGQFELSGAPLETLHQTCAEVNSHLYQVKAVAEEMGIGFLGTGFQPKWGLKDIPIMPKGRYEIIRNYMPKVGSLGLDMMFRTCTVQVNLDFSSEADMIRKFRAGLALQPIATALFANSPFTEGKPNGYLSKRSHIWTDTDNNRAGMLPFVFDDSFGFEQYVDYALDVPMYFVYRKKKYVDCTGLSFRDFMNGKLPPIPGEYPTLNDWENHLTTIFPEVRLKRYLEMRGADGGPWRRLCALPAFWVGILYDEGSLQSVLDMTFDWTAEERDMLRNKVPKSGLKTPFRDGLLMHVAQDVVKLAKEGLERRGFKETGFLNEVAEVVKTGVTPAEKLLELYHGKWGQSVDPIFEELLY.

C187 and C407 are joined by a disulfide.

This sequence belongs to the carboxylate-amine ligase family. Glutamate--cysteine ligase type 2 subfamily. In terms of assembly, homodimer or monomer when oxidized or reduced, respectively. The Cys-187-Cys-407 disulfide bridge is known to modulate the enzyme activity according to the redox status. The oxidized form constitutes the active enzyme.

The protein resides in the plastid. Its subcellular location is the chloroplast. The catalysed reaction is L-cysteine + L-glutamate + ATP = gamma-L-glutamyl-L-cysteine + ADP + phosphate + H(+). Its pathway is sulfur metabolism; glutathione biosynthesis; glutathione from L-cysteine and L-glutamate: step 1/2. In Solanum lycopersicum (Tomato), this protein is Glutamate--cysteine ligase, chloroplastic (GSH1).